Consider the following 269-residue polypeptide: Staphylococcal secretory antigen ssaA2 (269 aa).

Positions 1-27 are cleaved as a signal peptide; sequence MKKIATATIATAGFATIAIASGNQAHA. 7 consecutive repeat copies span residues 83–85, 88–90, 91–93, 97–99, 103–105, 106–108, and 115–117. Positions 83-115 are 7 X 3 AA repeats of Y-[NS]-N; sequence YNNYNYNNYNNGYSYNNYSRYNNYSNNNQSYNY. The Peptidase C51 domain occupies 148–269; sequence MAPSSNGRSI…SQAAGYNFIH (122 aa).

The protein resides in the secreted. Its function is as follows. Not known; immunogenic protein. This chain is Staphylococcal secretory antigen ssaA2 (ssaA2), found in Staphylococcus aureus (strain MSSA476).